We begin with the raw amino-acid sequence, 447 residues long: Tubulin beta-1 chain (447 aa).

Residues Gln-11, Glu-69, Ser-138, Gly-142, Thr-143, Gly-144, Asn-204, and Asn-226 each contribute to the GTP site. Glu-69 provides a ligand contact to Mg(2+). Positions 427 to 447 (EATADEDAEFEEEQEAEVEEN) are disordered. Residues 429–447 (TADEDAEFEEEQEAEVEEN) show a composition bias toward acidic residues.

Belongs to the tubulin family. As to quaternary structure, dimer of alpha and beta chains. A typical microtubule is a hollow water-filled tube with an outer diameter of 25 nm and an inner diameter of 15 nM. Alpha-beta heterodimers associate head-to-tail to form protofilaments running lengthwise along the microtubule wall with the beta-tubulin subunit facing the microtubule plus end conferring a structural polarity. Microtubules usually have 13 protofilaments but different protofilament numbers can be found in some organisms and specialized cells. The cofactor is Mg(2+).

Its subcellular location is the cytoplasm. It localises to the cytoskeleton. In terms of biological role, tubulin is the major constituent of microtubules, a cylinder consisting of laterally associated linear protofilaments composed of alpha- and beta-tubulin heterodimers. Microtubules grow by the addition of GTP-tubulin dimers to the microtubule end, where a stabilizing cap forms. Below the cap, tubulin dimers are in GDP-bound state, owing to GTPase activity of alpha-tubulin. The chain is Tubulin beta-1 chain from Glossina morsitans morsitans (Savannah tsetse fly).